The sequence spans 365 residues: UDP-N-acetylglucosamine--N-acetylmuramyl-(pentapeptide) pyrophosphoryl-undecaprenol N-acetylglucosamine transferase (365 aa).

Residues 17–19, Asn129, Arg167, Ser194, Ile250, 269–274, and Gln295 contribute to the UDP-N-acetyl-alpha-D-glucosamine site; these read TGG and ALTVSE.

It belongs to the glycosyltransferase 28 family. MurG subfamily.

The protein resides in the cell inner membrane. It catalyses the reaction di-trans,octa-cis-undecaprenyl diphospho-N-acetyl-alpha-D-muramoyl-L-alanyl-D-glutamyl-meso-2,6-diaminopimeloyl-D-alanyl-D-alanine + UDP-N-acetyl-alpha-D-glucosamine = di-trans,octa-cis-undecaprenyl diphospho-[N-acetyl-alpha-D-glucosaminyl-(1-&gt;4)]-N-acetyl-alpha-D-muramoyl-L-alanyl-D-glutamyl-meso-2,6-diaminopimeloyl-D-alanyl-D-alanine + UDP + H(+). It participates in cell wall biogenesis; peptidoglycan biosynthesis. Functionally, cell wall formation. Catalyzes the transfer of a GlcNAc subunit on undecaprenyl-pyrophosphoryl-MurNAc-pentapeptide (lipid intermediate I) to form undecaprenyl-pyrophosphoryl-MurNAc-(pentapeptide)GlcNAc (lipid intermediate II). This Shewanella piezotolerans (strain WP3 / JCM 13877) protein is UDP-N-acetylglucosamine--N-acetylmuramyl-(pentapeptide) pyrophosphoryl-undecaprenol N-acetylglucosamine transferase.